Consider the following 95-residue polypeptide: MASETVSNHQEKALALLQADAEKILRLIKVQMDHLTMPQCPLYEEVLDTQMFGLSREVDFAVRLGLIAEEQGKVMLGELERELSALHEAFTNKQQ.

The protein belongs to the UPF0358 family.

This Bacillus anthracis protein is UPF0358 protein BA_4159/GBAA_4159/BAS3861.